The chain runs to 233 residues: RNA-free ribonuclease P (233 aa).

Belongs to the HARP family.

It catalyses the reaction Endonucleolytic cleavage of RNA, removing 5'-extranucleotides from tRNA precursor.. Functionally, RNA-free RNase P that catalyzes the removal of the 5'-leader sequence from pre-tRNA to produce the mature 5'-terminus. This is RNA-free ribonuclease P from Methanocaldococcus jannaschii (strain ATCC 43067 / DSM 2661 / JAL-1 / JCM 10045 / NBRC 100440) (Methanococcus jannaschii).